Consider the following 359-residue polypeptide: Aromatic amino acid aminotransferase (359 aa).

Positions 1-42 are disordered; the sequence is MSERKPPYLRSALDSIPPYRPGRKVVGPDGRSAKLSSNESPF. K223 carries the post-translational modification N6-(pyridoxal phosphate)lysine.

Belongs to the class-II pyridoxal-phosphate-dependent aminotransferase family. In terms of assembly, homodimer. Requires pyridoxal 5'-phosphate as cofactor.

It carries out the reaction an aromatic L-alpha-amino acid + 2-oxoglutarate = an aromatic oxo-acid + L-glutamate. Its function is as follows. Aminotransferase that catalyzes the conversion of aromatic amino acids and 2-oxoglutarate into corresponding aromatic oxo acids and L-glutamate. This Thermobifida fusca (strain YX) protein is Aromatic amino acid aminotransferase.